We begin with the raw amino-acid sequence, 724 residues long: Catalase-peroxidase (724 aa).

Residues 98–226 (WHSAGTYRIA…LATVMMGLIY (129 aa)) constitute a cross-link (tryptophyl-tyrosyl-methioninium (Trp-Tyr) (with M-252)). The active-site Proton acceptor is the His99. Residues 226 to 252 (YVNPEGVDGNPDPLKTAQDMRVTFARM) constitute a cross-link (tryptophyl-tyrosyl-methioninium (Tyr-Met) (with W-98)). Residue His267 participates in heme b binding.

The protein belongs to the peroxidase family. Peroxidase/catalase subfamily. As to quaternary structure, homodimer or homotetramer. Heme b serves as cofactor. Post-translationally, formation of the three residue Trp-Tyr-Met cross-link is important for the catalase, but not the peroxidase activity of the enzyme.

The enzyme catalyses H2O2 + AH2 = A + 2 H2O. It carries out the reaction 2 H2O2 = O2 + 2 H2O. Its function is as follows. Bifunctional enzyme with both catalase and broad-spectrum peroxidase activity. This is Catalase-peroxidase from Vibrio cholerae serotype O1 (strain ATCC 39541 / Classical Ogawa 395 / O395).